The primary structure comprises 878 residues: DNA gyrase subunit A (878 aa).

Residues 34–533 (LPDVRDGLKP…NSADINIEDL (500 aa)) enclose the Topo IIA-type catalytic domain. Residue Y122 is the O-(5'-phospho-DNA)-tyrosine intermediate of the active site. The GyrA-box signature appears at 560-566 (QRRGGKG). Residues 844–878 (DDEELDAIDGSVAEGDEDIAPEAESDDDVADDADE) are disordered. Over residues 857–878 (EGDEDIAPEAESDDDVADDADE) the composition is skewed to acidic residues.

This sequence belongs to the type II topoisomerase GyrA/ParC subunit family. As to quaternary structure, heterotetramer, composed of two GyrA and two GyrB chains. In the heterotetramer, GyrA contains the active site tyrosine that forms a transient covalent intermediate with DNA, while GyrB binds cofactors and catalyzes ATP hydrolysis.

The protein localises to the cytoplasm. It carries out the reaction ATP-dependent breakage, passage and rejoining of double-stranded DNA.. A type II topoisomerase that negatively supercoils closed circular double-stranded (ds) DNA in an ATP-dependent manner to modulate DNA topology and maintain chromosomes in an underwound state, and also catalyzes the interconversion of other topological isomers of double-stranded DNA rings, including catenanes and knotted rings. Replenishes negative supercoiling downstream of highly transcribed genes to help control overall chromosomal supercoiling density. E.coli makes 15% more negative supercoils in pBR322 plasmid DNA than S.typhimurium; the S.typhimurium GyrB subunit is toxic in E.coli, while the E.coli copy can be expressed in S.typhimurium even though the 2 subunits have 777/804 residues identical. Its function is as follows. Negative supercoiling favors strand separation, and DNA replication, transcription, recombination and repair, all of which involve strand separation. Type II topoisomerases break and join 2 DNA strands simultaneously in an ATP-dependent manner. The chain is DNA gyrase subunit A from Salmonella typhimurium (strain LT2 / SGSC1412 / ATCC 700720).